Reading from the N-terminus, the 178-residue chain is Large ribosomal subunit protein uL6 (178 aa).

The protein belongs to the universal ribosomal protein uL6 family. In terms of assembly, part of the 50S ribosomal subunit.

Functionally, this protein binds to the 23S rRNA, and is important in its secondary structure. It is located near the subunit interface in the base of the L7/L12 stalk, and near the tRNA binding site of the peptidyltransferase center. The polypeptide is Large ribosomal subunit protein uL6 (Limosilactobacillus reuteri (strain DSM 20016) (Lactobacillus reuteri)).